The following is a 392-amino-acid chain: Serine protease ea (392 aa).

The N-terminal stretch at 1–19 is a signal peptide; it reads MLKPSIICLFLGILAKSSA. The propeptide at 20 to 127 is activation peptide; it reads GQFYFPNEAA…GQCGNILSNR (108 aa). One can recognise a Clip domain in the interval 36 to 89; the sequence is RCITPNRERALCIHLEDCKYLYGLLTTTPLRDTDRLYLSRSQCGYTNGKVLICC. 3 cysteine pairs are disulfide-bonded: cysteine 37/cysteine 88, cysteine 47/cysteine 78, and cysteine 53/cysteine 89. The N-linked (GlcNAc...) asparagine glycan is linked to asparagine 107. 5 disulfides stabilise this stretch: cysteine 120–cysteine 260, cysteine 158–cysteine 174, cysteine 202–cysteine 212, cysteine 307–cysteine 324, and cysteine 334–cysteine 367. Residues 128–391 form the Peptidase S1 domain; sequence IYGGMKTKID…YVDWIQNTIE (264 aa). Histidine 173 (charge relay system) is an active-site residue. Ca(2+)-binding residues include glutamate 193, aspartate 195, threonine 198, and aspartate 201. The active-site Charge relay system is aspartate 240. The Charge relay system role is filled by serine 338.

It belongs to the peptidase S1 family. CLIP subfamily. In terms of assembly, interacts with Spn27A; the two proteins are covalently linked leading to inhibition of ea catalytic activity. Interacts (via Peptidase domain) with snk (via N-terminal prodomain); leads to proteolytic activation of ea by snk. Sulfation of a vitelline membrane component by pip is required for proteolytic cleavage of ea by snk but not for the interaction of ea with snk. Proteolytically cleaved by snk. Activation peptide and active catalytic domain remain associated by a disulfide bond. Processed ea/easter is present in extremely low amounts in the early embryo as it is rapidly converted into a high molecular mass complex made up of ea covalently bound to the serpin Spn27A. Zymogen activation is also controlled by a negative feedback loop from Dorsal.

The protein resides in the secreted. Activated proteolytically by snk; activation requires both activation of the ndl-gd-snk protease cascade and sulfation of a vitelline membrane component by pip. Inhibited by binding of the serpin Spn27A. Its function is as follows. Component of the extracellular signaling pathway that establishes the dorsal-ventral pathway of the embryo. A protease cascade involving ndl, gd, snk and ea results in activation of the spz Toll receptor ligand; acts downstream of ndl, gd and snk and is required for proteolytic processing of spz. Activation of ea requires both activation of the ndl-gd-snk protease cascade and sulfation of a vitelline membrane component by pip. Localized activation of the Toll receptor in the ventral region of the embryo defines cell identities along the dorsal-ventral continuum. The sequence is that of Serine protease ea from Drosophila melanogaster (Fruit fly).